Reading from the N-terminus, the 80-residue chain is Exodeoxyribonuclease 7 small subunit (80 aa).

This sequence belongs to the XseB family. Heterooligomer composed of large and small subunits.

It is found in the cytoplasm. It carries out the reaction Exonucleolytic cleavage in either 5'- to 3'- or 3'- to 5'-direction to yield nucleoside 5'-phosphates.. Its function is as follows. Bidirectionally degrades single-stranded DNA into large acid-insoluble oligonucleotides, which are then degraded further into small acid-soluble oligonucleotides. In Rickettsia typhi (strain ATCC VR-144 / Wilmington), this protein is Exodeoxyribonuclease 7 small subunit.